We begin with the raw amino-acid sequence, 981 residues long: Bifunctional glutamine synthetase adenylyltransferase/adenylyl-removing enzyme (981 aa).

Positions 1–473 (MTMPLPSIEQ…RSVFNNLIGF (473 aa)) are adenylyl removase. An adenylyl transferase region spans residues 479–981 (ADDSDNAWSD…HQIWQKLFFE (503 aa)).

It belongs to the GlnE family. It depends on Mg(2+) as a cofactor.

It catalyses the reaction [glutamine synthetase]-O(4)-(5'-adenylyl)-L-tyrosine + phosphate = [glutamine synthetase]-L-tyrosine + ADP. The enzyme catalyses [glutamine synthetase]-L-tyrosine + ATP = [glutamine synthetase]-O(4)-(5'-adenylyl)-L-tyrosine + diphosphate. Functionally, involved in the regulation of glutamine synthetase GlnA, a key enzyme in the process to assimilate ammonia. When cellular nitrogen levels are high, the C-terminal adenylyl transferase (AT) inactivates GlnA by covalent transfer of an adenylyl group from ATP to specific tyrosine residue of GlnA, thus reducing its activity. Conversely, when nitrogen levels are low, the N-terminal adenylyl removase (AR) activates GlnA by removing the adenylyl group by phosphorolysis, increasing its activity. The regulatory region of GlnE binds the signal transduction protein PII (GlnB) which indicates the nitrogen status of the cell. This is Bifunctional glutamine synthetase adenylyltransferase/adenylyl-removing enzyme from Mannheimia succiniciproducens (strain KCTC 0769BP / MBEL55E).